A 53-amino-acid polypeptide reads, in one-letter code: ATP synthase protein 8 (53 aa).

The helical transmembrane segment at 6–26 (PIGWLSLFIIFSLTFILFSMM) threads the bilayer.

Belongs to the ATPase protein 8 family. In terms of assembly, F-type ATPases have 2 components, CF(1) - the catalytic core - and CF(0) - the membrane proton channel.

The protein resides in the mitochondrion membrane. Its function is as follows. Mitochondrial membrane ATP synthase (F(1)F(0) ATP synthase or Complex V) produces ATP from ADP in the presence of a proton gradient across the membrane which is generated by electron transport complexes of the respiratory chain. F-type ATPases consist of two structural domains, F(1) - containing the extramembraneous catalytic core and F(0) - containing the membrane proton channel, linked together by a central stalk and a peripheral stalk. During catalysis, ATP synthesis in the catalytic domain of F(1) is coupled via a rotary mechanism of the central stalk subunits to proton translocation. Part of the complex F(0) domain. Minor subunit located with subunit a in the membrane. This is ATP synthase protein 8 (mt:ATPase8) from Ceratitis capitata (Mediterranean fruit fly).